Here is a 499-residue protein sequence, read N- to C-terminus: Lysine--tRNA ligase (499 aa).

The Mg(2+) site is built by Glu408 and Glu415.

It belongs to the class-II aminoacyl-tRNA synthetase family. As to quaternary structure, homodimer. The cofactor is Mg(2+).

It localises to the cytoplasm. It catalyses the reaction tRNA(Lys) + L-lysine + ATP = L-lysyl-tRNA(Lys) + AMP + diphosphate. The polypeptide is Lysine--tRNA ligase (Bacillus cereus (strain B4264)).